Reading from the N-terminus, the 137-residue chain is Transcription antitermination protein NusB (137 aa).

This sequence belongs to the NusB family.

Involved in transcription antitermination. Required for transcription of ribosomal RNA (rRNA) genes. Binds specifically to the boxA antiterminator sequence of the ribosomal RNA (rrn) operons. The chain is Transcription antitermination protein NusB from Clavibacter michiganensis subsp. michiganensis (strain NCPPB 382).